The sequence spans 362 residues: Phosphoserine aminotransferase (362 aa).

Arg-42 lines the L-glutamate pocket. Residues 76–77 (AR), Trp-102, Thr-153, Asp-174, and Gln-197 contribute to the pyridoxal 5'-phosphate site. Lys-198 is modified (N6-(pyridoxal phosphate)lysine). 239-240 (NT) is a pyridoxal 5'-phosphate binding site.

Belongs to the class-V pyridoxal-phosphate-dependent aminotransferase family. SerC subfamily. In terms of assembly, homodimer. Requires pyridoxal 5'-phosphate as cofactor.

It is found in the cytoplasm. The catalysed reaction is O-phospho-L-serine + 2-oxoglutarate = 3-phosphooxypyruvate + L-glutamate. The enzyme catalyses 4-(phosphooxy)-L-threonine + 2-oxoglutarate = (R)-3-hydroxy-2-oxo-4-phosphooxybutanoate + L-glutamate. Its pathway is amino-acid biosynthesis; L-serine biosynthesis; L-serine from 3-phospho-D-glycerate: step 2/3. The protein operates within cofactor biosynthesis; pyridoxine 5'-phosphate biosynthesis; pyridoxine 5'-phosphate from D-erythrose 4-phosphate: step 3/5. Functionally, catalyzes the reversible conversion of 3-phosphohydroxypyruvate to phosphoserine and of 3-hydroxy-2-oxo-4-phosphonooxybutanoate to phosphohydroxythreonine. This Xenorhabdus nematophila (strain ATCC 19061 / DSM 3370 / CCUG 14189 / LMG 1036 / NCIMB 9965 / AN6) protein is Phosphoserine aminotransferase.